The sequence spans 193 residues: Large ribosomal subunit protein eL19B (193 aa).

A disordered region spans residues 157-179; sequence EQQDARRARAKAARQRRAKAVEE. Basic residues predominate over residues 164–174; it reads ARAKAARQRRA.

Belongs to the eukaryotic ribosomal protein eL19 family. Component of the large ribosomal subunit (LSU). Mature yeast ribosomes consist of a small (40S) and a large (60S) subunit. The 40S small subunit contains 1 molecule of ribosomal RNA (18S rRNA) and at least 33 different proteins. The large 60S subunit contains 3 rRNA molecules (25S, 5.8S and 5S rRNA) and at least 46 different proteins. eL19 lies in close proximity to the binding site for eukaryotic initiation factor eIF4G.

It localises to the cytoplasm. Its function is as follows. Component of the ribosome, a large ribonucleoprotein complex responsible for the synthesis of proteins in the cell. The small ribosomal subunit (SSU) binds messenger RNAs (mRNAs) and translates the encoded message by selecting cognate aminoacyl-transfer RNA (tRNA) molecules. The large subunit (LSU) contains the ribosomal catalytic site termed the peptidyl transferase center (PTC), which catalyzes the formation of peptide bonds, thereby polymerizing the amino acids delivered by tRNAs into a polypeptide chain. The nascent polypeptides leave the ribosome through a tunnel in the LSU and interact with protein factors that function in enzymatic processing, targeting, and the membrane insertion of nascent chains at the exit of the ribosomal tunnel. eL19 may play a role in the last stages of translation initiation, in particular subunit joining and shedding/releasing factors. This chain is Large ribosomal subunit protein eL19B (rpl1902), found in Schizosaccharomyces pombe (strain 972 / ATCC 24843) (Fission yeast).